The sequence spans 185 residues: Probable chorismate pyruvate-lyase (185 aa).

Residues Arg84, Leu122, and Glu178 each coordinate substrate.

Belongs to the UbiC family.

It localises to the cytoplasm. It carries out the reaction chorismate = 4-hydroxybenzoate + pyruvate. It participates in cofactor biosynthesis; ubiquinone biosynthesis. Its function is as follows. Removes the pyruvyl group from chorismate, with concomitant aromatization of the ring, to provide 4-hydroxybenzoate (4HB) for the ubiquinone pathway. In Hydrogenovibrio crunogenus (strain DSM 25203 / XCL-2) (Thiomicrospira crunogena), this protein is Probable chorismate pyruvate-lyase.